The chain runs to 419 residues: Endochitinase 2 (419 aa).

An N-terminal signal peptide occupies residues 1-18; sequence MHHLRALVGVGLAGLAAG. A GH18 domain is found at 35–343; it reads AQNVVYWGQN…QQAKSILVNG (309 aa). N-linked (GlcNAc...) asparagine glycosylation is present at asparagine 153. The active-site Proton donor is glutamate 173. N-linked (GlcNAc...) asparagine glycosylation is found at asparagine 237 and asparagine 256. The segment at 343 to 390 is disordered; it reads GAPCPSSGPPSSTPATAPAPTATTMPSSTSVSSPTASPTGGTVPQWGQ. The span at 355-384 shows a compositional bias: low complexity; the sequence is TPATAPAPTATTMPSSTSVSSPTASPTGGT. One can recognise a CBM1 domain in the interval 383-419; that stretch reads GTVPQWGQCGGEGYSGPTQCVPPYQCVKQGDWWSSCR.

Belongs to the glycosyl hydrolase 18 family. Chitinase class III subfamily.

The protein resides in the secreted. It carries out the reaction Random endo-hydrolysis of N-acetyl-beta-D-glucosaminide (1-&gt;4)-beta-linkages in chitin and chitodextrins.. Its function is as follows. Secreted chitinase involved in the degradation of chitin, a component of the cell walls of fungi and exoskeletal elements of some animals (including worms and arthropods). Participates in the infection process and directly acts in the penetration process of the host cuticle. This Metarhizium anisopliae (Entomophthora anisopliae) protein is Endochitinase 2 (chi2).